A 157-amino-acid chain; its full sequence is Dihydrofolate reductase type 5 (157 aa).

One can recognise a DHFR domain in the interval 2 to 156; that stretch reads KVSLMAAKAK…INYCYQIWQK (155 aa).

The protein belongs to the dihydrofolate reductase family. In terms of assembly, homodimer.

The catalysed reaction is (6S)-5,6,7,8-tetrahydrofolate + NADP(+) = 7,8-dihydrofolate + NADPH + H(+). Its pathway is cofactor biosynthesis; tetrahydrofolate biosynthesis; 5,6,7,8-tetrahydrofolate from 7,8-dihydrofolate: step 1/1. Its function is as follows. Key enzyme in folate metabolism. Catalyzes an essential reaction for de novo glycine and purine synthesis, and for DNA precursor synthesis. In Escherichia coli, this protein is Dihydrofolate reductase type 5 (dhfrV).